The chain runs to 178 residues: MSSTKDELQLYAKAIYNCAISNHQSLDHWKTMLQLMANILNNEIIKNLISKAYFSQHVISLFIDLCCNKVNQYGINLIKILAENKRLMLLEKLYKEFINLCELYQGVVNITVISAHKLNEEYISKINIMLKKRFFKKINVTYVIDESIIGGLIIKFCDTVINASIHSRLEKLLNILQY.

The protein belongs to the ATPase delta chain family. In terms of assembly, F-type ATPases have 2 components, F(1) - the catalytic core - and F(0) - the membrane proton channel. F(1) has five subunits: alpha(3), beta(3), gamma(1), delta(1), epsilon(1). F(0) has three main subunits: a(1), b(2) and c(10-14). The alpha and beta chains form an alternating ring which encloses part of the gamma chain. F(1) is attached to F(0) by a central stalk formed by the gamma and epsilon chains, while a peripheral stalk is formed by the delta and b chains.

Its subcellular location is the cell membrane. F(1)F(0) ATP synthase produces ATP from ADP in the presence of a proton or sodium gradient. F-type ATPases consist of two structural domains, F(1) containing the extramembraneous catalytic core and F(0) containing the membrane proton channel, linked together by a central stalk and a peripheral stalk. During catalysis, ATP synthesis in the catalytic domain of F(1) is coupled via a rotary mechanism of the central stalk subunits to proton translocation. Its function is as follows. This protein is part of the stalk that links CF(0) to CF(1). It either transmits conformational changes from CF(0) to CF(1) or is implicated in proton conduction. In Buchnera aphidicola subsp. Baizongia pistaciae (strain Bp), this protein is ATP synthase subunit delta.